Here is a 470-residue protein sequence, read N- to C-terminus: FLYWCH transcription factor 2 (470 aa).

Residues 102 to 148 (SQLISEDTRPSASSSPSSTATAVSNSGQSNATSTSSSSTEPEYKPRN) form a disordered region. The span at 111–140 (PSASSSPSSTATAVSNSGQSNATSTSSSST) shows a compositional bias: low complexity. The segment at 145 to 204 (KPRNVREKVYADGYIMSFDKKSCCGTKEFWRCERKNDCNARMHSDINTREIVRKLHPHNH) adopts an FLYWCH-type zinc-finger fold.

In terms of biological role, probable transcription factor. May bind to the promoters of target genes, including micro-RNA genes, in order to repress expression, and acting redundantly with flh-1 and flh-3. In Caenorhabditis elegans, this protein is FLYWCH transcription factor 2.